Consider the following 320-residue polypeptide: Cytochrome c1-1, heme protein, mitochondrial (320 aa).

A mitochondrion-targeting transit peptide spans 1-77 (MSLGKKIRIG…LLSFATIAYS (77 aa)). At 78 to 280 (DEAEHGLECP…WAAEPEMEER (203 aa)) the chain is on the mitochondrial intermembrane side. The Cytochrome c domain occupies 103 to 210 (ASIRRGHQVY…NGQNYVFALL (108 aa)). Positions 116, 119, 120, and 239 each coordinate heme c. A helical transmembrane segment spans residues 281–301 (KLMGFKWIFVLSLALLQAAYY). Over 302–320 (RRLRWSVLKSRKLVLDVVN) the chain is Mitochondrial matrix.

The protein belongs to the cytochrome c family. Component of the ubiquinol-cytochrome c oxidoreductase (cytochrome b-c1 complex, complex III, CIII), a multisubunit enzyme composed of 3 respiratory subunits cytochrome b, cytochrome c1 and Rieske protein, 2 core protein subunits, and additional low-molecular weight protein subunits. The complex exists as an obligatory dimer and forms supercomplexes (SCs) in the inner mitochondrial membrane with cytochrome c oxidase (complex IV, CIV). It depends on heme c as a cofactor. In all tissues analyzed.

The protein localises to the mitochondrion inner membrane. It catalyses the reaction a quinol + 2 Fe(III)-[cytochrome c](out) = a quinone + 2 Fe(II)-[cytochrome c](out) + 2 H(+)(out). In terms of biological role, component of the ubiquinol-cytochrome c oxidoreductase, a multisubunit transmembrane complex that is part of the mitochondrial electron transport chain which drives oxidative phosphorylation. The respiratory chain contains 3 multisubunit complexes succinate dehydrogenase (complex II, CII), ubiquinol-cytochrome c oxidoreductase (cytochrome b-c1 complex, complex III, CIII) and cytochrome c oxidase (complex IV, CIV), that cooperate to transfer electrons derived from NADH and succinate to molecular oxygen, creating an electrochemical gradient over the inner membrane that drives transmembrane transport and the ATP synthase. The cytochrome b-c1 complex catalyzes electron transfer from ubiquinol to cytochrome c, linking this redox reaction to translocation of protons across the mitochondrial inner membrane, with protons being carried across the membrane as hydrogens on the quinol. In the process called Q cycle, 2 protons are consumed from the matrix, 4 protons are released into the intermembrane space and 2 electrons are passed to cytochrome c. Cytochrome c1 is a catalytic core subunit containing a c-type heme. It transfers electrons from the [2Fe-2S] iron-sulfur cluster of the Rieske protein to cytochrome c. This chain is Cytochrome c1-1, heme protein, mitochondrial (CYCL), found in Solanum tuberosum (Potato).